The chain runs to 371 residues: Opine oxidase subunit B (371 aa).

In terms of assembly, heterodimer of a subunit A and a subunit B.

It participates in opine metabolism; octopine degradation. Oxidative cleavage of octopine into L-arginine and pyruvate. This is Opine oxidase subunit B (ooxB) from Rhizobium meliloti (Ensifer meliloti).